A 349-amino-acid chain; its full sequence is Eukaryotic translation initiation factor 3 subunit I (349 aa).

6 WD repeats span residues 8–49 (GHER…GTLE), 51–91 (HIGT…QSWE), 93–135 (PTPV…DYTK), 148–187 (SDAKKVTVAGWSANGDFIIAGHEDGYVSKYNSSTGEFIET), 197–239 (EKIA…KVYK), and 295–336 (GHFG…FEFD).

It belongs to the eIF-3 subunit I family. In terms of assembly, component of the eukaryotic translation initiation factor 3 (eIF-3) complex.

It localises to the cytoplasm. Component of the eukaryotic translation initiation factor 3 (eIF-3) complex, which is involved in protein synthesis of a specialized repertoire of mRNAs and, together with other initiation factors, stimulates binding of mRNA and methionyl-tRNAi to the 40S ribosome. The eIF-3 complex specifically targets and initiates translation of a subset of mRNAs involved in cell proliferation. The chain is Eukaryotic translation initiation factor 3 subunit I from Debaryomyces hansenii (strain ATCC 36239 / CBS 767 / BCRC 21394 / JCM 1990 / NBRC 0083 / IGC 2968) (Yeast).